Here is a 285-residue protein sequence, read N- to C-terminus: Shikimate dehydrogenase (NADP(+)) (285 aa).

Shikimate-binding positions include S21–S23 and T68. The active-site Proton acceptor is the K72. E83 contacts NADP(+). Shikimate-binding residues include N92 and D107. Residues G132–S136, N156–R161, and L221 each bind NADP(+). Residue Y223 coordinates shikimate. G244 provides a ligand contact to NADP(+).

This sequence belongs to the shikimate dehydrogenase family. As to quaternary structure, homodimer.

It carries out the reaction shikimate + NADP(+) = 3-dehydroshikimate + NADPH + H(+). Its pathway is metabolic intermediate biosynthesis; chorismate biosynthesis; chorismate from D-erythrose 4-phosphate and phosphoenolpyruvate: step 4/7. In terms of biological role, involved in the biosynthesis of the chorismate, which leads to the biosynthesis of aromatic amino acids. Catalyzes the reversible NADPH linked reduction of 3-dehydroshikimate (DHSA) to yield shikimate (SA). The polypeptide is Shikimate dehydrogenase (NADP(+)) (Nitrobacter hamburgensis (strain DSM 10229 / NCIMB 13809 / X14)).